A 283-amino-acid chain; its full sequence is Putative 4-diphosphocytidyl-2-C-methyl-D-erythritol kinase (283 aa).

Residue Lys10 is part of the active site. 94 to 104 (PVCAGLGGGST) contributes to the ATP binding site. Asp136 is a catalytic residue.

The protein belongs to the GHMP kinase family. IspE subfamily.

It catalyses the reaction 4-CDP-2-C-methyl-D-erythritol + ATP = 4-CDP-2-C-methyl-D-erythritol 2-phosphate + ADP + H(+). Functionally, catalyzes the phosphorylation of the position 2 hydroxy group of 4-diphosphocytidyl-2C-methyl-D-erythritol. This is Putative 4-diphosphocytidyl-2-C-methyl-D-erythritol kinase from Streptococcus agalactiae serotype III (strain NEM316).